The primary structure comprises 365 residues: Chorismate synthase (365 aa).

An NADP(+)-binding site is contributed by arginine 47. FMN-binding positions include 124-126 (RAS), glycine 287, 302-306 (KPTAT), and arginine 328.

Belongs to the chorismate synthase family. As to quaternary structure, homotetramer. FMNH2 serves as cofactor.

It carries out the reaction 5-O-(1-carboxyvinyl)-3-phosphoshikimate = chorismate + phosphate. The protein operates within metabolic intermediate biosynthesis; chorismate biosynthesis; chorismate from D-erythrose 4-phosphate and phosphoenolpyruvate: step 7/7. Catalyzes the anti-1,4-elimination of the C-3 phosphate and the C-6 proR hydrogen from 5-enolpyruvylshikimate-3-phosphate (EPSP) to yield chorismate, which is the branch point compound that serves as the starting substrate for the three terminal pathways of aromatic amino acid biosynthesis. This reaction introduces a second double bond into the aromatic ring system. This chain is Chorismate synthase, found in Prochlorococcus marinus (strain MIT 9312).